Consider the following 156-residue polypeptide: ATP synthase subunit b (156 aa).

Residues 5 to 25 (LTLIVQMLVFAAFVLFTMKLV) form a helical membrane-spanning segment.

This sequence belongs to the ATPase B chain family. In terms of assembly, F-type ATPases have 2 components, F(1) - the catalytic core - and F(0) - the membrane proton channel. F(1) has five subunits: alpha(3), beta(3), gamma(1), delta(1), epsilon(1). F(0) has three main subunits: a(1), b(2) and c(10-14). The alpha and beta chains form an alternating ring which encloses part of the gamma chain. F(1) is attached to F(0) by a central stalk formed by the gamma and epsilon chains, while a peripheral stalk is formed by the delta and b chains.

The protein resides in the cell inner membrane. F(1)F(0) ATP synthase produces ATP from ADP in the presence of a proton or sodium gradient. F-type ATPases consist of two structural domains, F(1) containing the extramembraneous catalytic core and F(0) containing the membrane proton channel, linked together by a central stalk and a peripheral stalk. During catalysis, ATP synthesis in the catalytic domain of F(1) is coupled via a rotary mechanism of the central stalk subunits to proton translocation. Functionally, component of the F(0) channel, it forms part of the peripheral stalk, linking F(1) to F(0). In Legionella pneumophila (strain Paris), this protein is ATP synthase subunit b.